The following is a 446-amino-acid chain: Chromosomal replication initiator protein DnaA (446 aa).

A domain I, interacts with DnaA modulators region spans residues methionine 1–glutamine 82. Residues asparagine 83–threonine 103 are domain II. The segment at serine 104 to aspartate 332 is domain III, AAA+ region. Positions 154, 155, 156, 157, and 158 each coordinate ATP. Threonine 158 serves as a coordination point for Mg(2+). The Initiator specific motif (ISM) signature appears at serine 182–arginine 206. Residues aspartate 214 and aspartate 215 each coordinate Mg(2+). A linker region spans residues isoleucine 333–isoleucine 346. A domain IV, binds dsDNA region spans residues proline 347 to lysine 446.

Belongs to the DnaA family. The DNA replisome assembles sequentially on oriC in this order; DnaA, DnaD, DnaB, DnaI-DnaC helicase. Oligomerizes as a right-handed, spiral filament on DNA at oriC. Forms an ATP-dependent helix on DNA at oriC; both DnaD and YabA inhibit formation of the DnaA helix. Forms an ATP-dependent oligomer, formation is stimulated by ds- and ssDNA; monomeric ADP-Soj inhibits oligomer formation. Interacts with DnaD. Interacts with YabA, and via YabA, with the replication machinery subunit beta sliding clamp DnaN. Interacts with YabA via domain IIIa (residues 109-275). Isolated domain I forms a 1:1 complex with SirA. Interacts with Soj, probably via domain III. Interacts via domains I and III with CcrZ. Interacts via domain IV with skin prophage-like element protein YqaH.

It localises to the cytoplasm. The protein localises to the nucleoid. It catalyses the reaction ATP + H2O = ADP + phosphate + H(+). Oligomerization of DnaA can be controlled by Soj; monomeric ADP-Soj inhibits formation of the DnaA helix. YabA prevents the cooperative binding of DnaA-ATP to oriC-containing sequences; increased levels of DnaN (beta sliding clamp subunit of DNA polymerase) removes YabA from association with DnaA on the chromosome, enabling increased association of DnaA with its chromosomal binding sites. Both Soj and YabA chase DnaA from oriC site, YabA tethers DnaA to the DNA replication fork via the beta sliding clamp subunit DnaN. SirA antagonizes the ability of DnaA to bind to the replication origin, and thus decreases replication inititation during sporulation. Small protein YqaH, part of the skin prophage-like element, binds to DnaA and antagonizes its replication initiation and transcriptional regulation activities. Its function is as follows. Plays an essential role in the initiation and regulation of chromosomal replication. ATP-DnaA binds to the origin of replication (oriC) to initiate formation of the DNA replication initiation complex once per cell cycle. Binds directly to oriC at a 9 bp consensus (DnaA box): 5'-TTATCCACA-3' and separates the double-stranded (ds)DNA. Forms a right-handed helical filament on oriC DNA; dsDNA binds to the exterior of the filament while single-stranded (ss)DNA is stabilized in the filament's interior. The ATP-DnaA-oriC complex binds and stabilizes one strand of the AT-rich DNA unwinding element (DUE or basal unwinding system, BUS), permitting loading of DNA polymerase. Binds ATP with high affinity, ADP with lower affinity, but not AMP, cAMP or cGMP; ATP stimulates binding to DnaA boxes. Once bound promotes sequence-specific strand separation of DnaA-trios (3'-GAT-5' consensus) adjacent to oriC in the presence of ATP but not ADP. Domains III and IV are sufficient to separate dsDNA strands. The 'initiator specific motif' (ISM) of domain III contacts the middle adenine residue of the DnaA-trio probably stretching and stabilizing ssDNA. DnaA-trio recognition is co-operative and depends on DnaA self-assembly. The ssDNA serves as an assembly region for the replication machinery. Tethered to DnaN (beta sliding clamp subunit of DNA polymerase) and thus replication forks by YabA. During replication initiation DnaA-ATP binds cooperatively to sequences in oriC. YabA prevents this cooperative binding while still allowing DnaA to bind DNA. During the cell cycle an initial phase occurs in which DnaA is associated with origin regions, then the origin regions become spatially separate from the centrally sequestered DnaA molecules, and most DnaA molecules are unable to reassociate with origin regions. Does not require YabA to bind DNA. During sporulation SirA prevents DnaA association with the replication origin to prevent excessive chromosome replication. Overexpression induces the SOS response; increasing expression of downstream dnaN blocks this induction. Over-initiation of DNA replication is very deleterious; isolated suppressors in relA, ndrR, dnaC, cshA and crrZ increase replication elongation, decrease replication inititation or lead to a decrease in the replicative DNA helicase. Binds acidic phospholipids. In terms of biological role, the half-life of ADP-DnaA is 1.5 minutes, of ATP-DnaA is 5 minutes at 37 degrees Celsius; in E.coli the half-life of ADP-DnaA is about 45 minutes. Also acts as a transcriptional regulator. DnaA inhibits its own gene expression. DnaA binds specifically to the promoter regions of at least 20 operons (56 genes), including itself, sda and dnaB, and probably controls their expression in response to DNA replication inhibition. This is Chromosomal replication initiator protein DnaA from Bacillus subtilis (strain 168).